Here is a 203-residue protein sequence, read N- to C-terminus: LexA repressor 2 (203 aa).

The segment at residues 28–48 (MREIARHLNVNGTLGVAKHLE) is a DNA-binding region (H-T-H motif). Active-site for autocatalytic cleavage activity residues include serine 122 and lysine 159.

The protein belongs to the peptidase S24 family. Homodimer.

The catalysed reaction is Hydrolysis of Ala-|-Gly bond in repressor LexA.. In terms of biological role, represses a number of genes involved in the response to DNA damage (SOS response), including recA and lexA. In the presence of single-stranded DNA, RecA interacts with LexA causing an autocatalytic cleavage which disrupts the DNA-binding part of LexA, leading to derepression of the SOS regulon and eventually DNA repair. This Geobacter sulfurreducens (strain ATCC 51573 / DSM 12127 / PCA) protein is LexA repressor 2.